The following is a 434-amino-acid chain: Bestrophin homolog 12 (434 aa).

The next 4 helical transmembrane spans lie at 31-51 (KVILHEFLMTAGAYFGVFLVF), 76-96 (VCIPMQMMLAFFIATVADQWE), 244-264 (IPIPLAYPQAVFLAVRIYFFF), and 278-298 (WALSHWGFPLLTTLQFIFLVG).

Belongs to the anion channel-forming bestrophin (TC 1.A.46) family. Calcium-sensitive chloride channel subfamily. As to quaternary structure, forms oligomers.

Its subcellular location is the cell membrane. Forms chloride channels. In Caenorhabditis elegans, this protein is Bestrophin homolog 12 (best-12).